The following is a 93-amino-acid chain: Small ribosomal subunit protein uS19 (93 aa).

Belongs to the universal ribosomal protein uS19 family.

Functionally, protein S19 forms a complex with S13 that binds strongly to the 16S ribosomal RNA. This Cutibacterium acnes (strain DSM 16379 / KPA171202) (Propionibacterium acnes) protein is Small ribosomal subunit protein uS19.